We begin with the raw amino-acid sequence, 533 residues long: Peptide chain release factor 3 (533 aa).

One can recognise a tr-type G domain in the interval 9–284; that stretch reads ARRRTFAIIS…ALCELSPPPL (276 aa). GTP contacts are provided by residues 18 to 25, 95 to 99, and 149 to 152; these read SHPDAGKT, DTPGH, and NKLD.

The protein belongs to the TRAFAC class translation factor GTPase superfamily. Classic translation factor GTPase family. PrfC subfamily.

It localises to the cytoplasm. In terms of biological role, increases the formation of ribosomal termination complexes and stimulates activities of RF-1 and RF-2. It binds guanine nucleotides and has strong preference for UGA stop codons. It may interact directly with the ribosome. The stimulation of RF-1 and RF-2 is significantly reduced by GTP and GDP, but not by GMP. The protein is Peptide chain release factor 3 of Cupriavidus necator (strain ATCC 17699 / DSM 428 / KCTC 22496 / NCIMB 10442 / H16 / Stanier 337) (Ralstonia eutropha).